The primary structure comprises 165 residues: Glycine cleavage system H protein, mitochondrial (165 aa).

A mitochondrion-targeting transit peptide spans 1 to 34; the sequence is MALRMWASSTANALKLSSSSRLHLSPTFSISRCF. The 83-residue stretch at 56-138 folds into the Lipoyl-binding domain; that stretch reads VATIGITDHA…YEDGWMIKIK (83 aa). Lys97 carries the N6-lipoyllysine modification.

This sequence belongs to the GcvH family. As to quaternary structure, the glycine cleavage system is composed of four proteins: P, T, L and H. The cofactor is (R)-lipoate.

It is found in the mitochondrion. The glycine cleavage system catalyzes the degradation of glycine. The H protein shuttles the methylamine group of glycine from the P protein to the T protein. The polypeptide is Glycine cleavage system H protein, mitochondrial (GDCSH) (Pisum sativum (Garden pea)).